The primary structure comprises 198 residues: 7-methyl-GTP pyrophosphatase (198 aa).

Residue Asp-69 is the Proton acceptor of the active site.

Belongs to the Maf family. YceF subfamily. A divalent metal cation is required as a cofactor.

It localises to the cytoplasm. It catalyses the reaction N(7)-methyl-GTP + H2O = N(7)-methyl-GMP + diphosphate + H(+). Its function is as follows. Nucleoside triphosphate pyrophosphatase that hydrolyzes 7-methyl-GTP (m(7)GTP). May have a dual role in cell division arrest and in preventing the incorporation of modified nucleotides into cellular nucleic acids. The chain is 7-methyl-GTP pyrophosphatase from Yersinia pseudotuberculosis serotype I (strain IP32953).